The following is a 408-amino-acid chain: Argininosuccinate synthase (408 aa).

Residues 11–19 (AYSGGLDTS) and Ala38 each bind ATP. Tyr91 and Ser96 together coordinate L-citrulline. ATP is bound at residue Gly121. Residues Thr123, Asn127, and Asp128 each coordinate L-aspartate. L-citrulline is bound at residue Asn127. Arg131, Ser182, Ser191, Glu267, and Tyr279 together coordinate L-citrulline.

This sequence belongs to the argininosuccinate synthase family. Type 1 subfamily. In terms of assembly, homotetramer.

Its subcellular location is the cytoplasm. It carries out the reaction L-citrulline + L-aspartate + ATP = 2-(N(omega)-L-arginino)succinate + AMP + diphosphate + H(+). Its pathway is amino-acid biosynthesis; L-arginine biosynthesis; L-arginine from L-ornithine and carbamoyl phosphate: step 2/3. This chain is Argininosuccinate synthase, found in Paracoccus denitrificans (strain Pd 1222).